Reading from the N-terminus, the 403-residue chain is Tetratricopeptide repeat protein 19, mitochondrial (403 aa).

Residues 1–67 (MALRSYCRQL…WHRRSWHRCA (67 aa)) constitute a mitochondrion transit peptide. TPR repeat units lie at residues 154 to 187 (IYTY…MLSG), 297 to 330 (LVLM…GQAA), and 336 to 369 (HVLL…AHTA).

The protein belongs to the TTC19 family. Binds to the mature mitochondrial complex III dimer, after the incorporation of the Rieske protein (UQCRFS1). Interacts with UQCRC1 and UQCRFS1. Interacts with ZFYVE26 and CHMP4B.

The protein resides in the mitochondrion inner membrane. In terms of biological role, required for the preservation of the structural and functional integrity of mitochondrial respiratory complex III by allowing the physiological turnover of the Rieske protein UQCRFS1. Involved in the clearance of UQCRFS1 N-terminal fragments, which are produced upon incorporation into the complex III and whose presence is detrimental for its catalytic activity. The chain is Tetratricopeptide repeat protein 19, mitochondrial (ttc19) from Danio rerio (Zebrafish).